Consider the following 163-residue polypeptide: Ribonuclease P protein subunit p25-like protein (163 aa).

Disordered stretches follow at residues M1–P22 and N129–S163. Residues G143 to P152 show a composition bias toward low complexity. Residues R153 to S163 are compositionally biased toward basic residues.

This sequence belongs to the histone-like Alba family.

It is found in the nucleus. Functionally, may be a component of ribonuclease P or MRP. The protein is Ribonuclease P protein subunit p25-like protein (RPP25L) of Homo sapiens (Human).